The chain runs to 414 residues: Schlafen-like protein 1 (414 aa).

The segment at 141–203 (LHHREQDDSG…ISQNRPSGVR (63 aa)) is disordered. Residues 154–185 (SHSPGPSPGPSPGPSPGFRRPPLPQLADPPPN) show a composition bias toward pro residues. 268 to 275 (GVEDSGLV) contributes to the ATP binding site. The stretch at 373-407 (RQKWTAELSKLEEKVDVLTLEKEQLQEQLRQRQTL) forms a coiled coil.

It belongs to the Schlafen family. Subgroup I subfamily.

This Rattus norvegicus (Rat) protein is Schlafen-like protein 1 (Slfnl1).